A 350-amino-acid polypeptide reads, in one-letter code: Putative ankyrin repeat protein RBE_0589 (350 aa).

ANK repeat units follow at residues 81–110, 114–151, and 153–182; these read DGFT…NPNI, DIVT…EPTD, and SGWT…NLDI.

The chain is Putative ankyrin repeat protein RBE_0589 from Rickettsia bellii (strain RML369-C).